The sequence spans 368 residues: uncharacterized protein (368 aa).

The protein belongs to the Gfo/Idh/MocA family.

This is an uncharacterized protein from Schizosaccharomyces pombe (strain 972 / ATCC 24843) (Fission yeast).